The chain runs to 474 residues: MSLSRRQFIQAAGLALGAGSLPLRAQASSTQQPQLPVPPLLESRRGQPLFLTLQRAHWAFSGNKKAAVWGINGMYLGPTVRVFNGDDVKLIYSNRLTEPVSMTISGLQVPGTLMGGEARMIRPGEDWSPVLPVRQPAANCWYHANTPNRMAPHVYNGLAGMWLVEDAVSKAMPLPSHYGVDDFPLIIQDKRLDNFGVPEYNPPAKGGFVGDTLLVNGAQSPFVEVSRGWVRLRLLNASNARRYTLQLSDGRPLYVVASDQGFLPAPVAVQQLSLAPGERREVVIDMSQGNEVSITAGESAGIMDRLRGLFEPSSILISTLVLTLKPTGLLPLVTDNLPMRLLADQIIEGSVIRSREFQLGDNLPGINGAIWDMNRVDVQAQQGTWERWIIHADMPQAFHIQGVSFLVKSVNGAAAMAEDRGWKDTVWVDGTVELWVYFNQVSSPQFPFLFYSQTLEMADRGSAGQLVTVAAPTL.

Residues 1–27 (MSLSRRQFIQAAGLALGAGSLPLRAQA) constitute a signal peptide (tat-type signal). Residues 229 to 288 (WVRLRLLNASNARRYTLQLSDGRPLYVVASDQGFLPAPVAVQQLSLAPGERREVVIDMSQ) form the Plastocyanin-like domain.

Belongs to the FtsP family. In terms of processing, predicted to be exported by the Tat system. The position of the signal peptide cleavage has not been experimentally proven.

The protein localises to the periplasm. In terms of biological role, cell division protein that is required for growth during stress conditions. May be involved in protecting or stabilizing the divisomal assembly under conditions of stress. The protein is Cell division protein FtsP of Yersinia pestis.